Here is a 418-residue protein sequence, read N- to C-terminus: Probable endo-beta-1,4-glucanase celB (418 aa).

The signal sequence occupies residues 1-18 (MVRTFAVTALALLPLVAA). 3 N-linked (GlcNAc...) asparagine glycosylation sites follow: Asn-46, Asn-118, and Asn-136. Residue Glu-215 is the Nucleophile of the active site. Glu-220 acts as the Proton donor in catalysis. N-linked (GlcNAc...) asparagine glycosylation is found at Asn-234 and Asn-291.

It belongs to the glycosyl hydrolase 7 (cellulase C) family.

Its subcellular location is the secreted. It carries out the reaction Endohydrolysis of (1-&gt;4)-beta-D-glucosidic linkages in cellulose, lichenin and cereal beta-D-glucans.. Its function is as follows. Has endoglucanase activity on substrates containing beta-1,4 glycosidic bonds, like in carboxymethylcellulose (CMC), hydroxyethylcellulose (HEC) and beta-glucan. Involved in the degradation of complex natural cellulosic substrates. This is Probable endo-beta-1,4-glucanase celB (celB) from Aspergillus clavatus (strain ATCC 1007 / CBS 513.65 / DSM 816 / NCTC 3887 / NRRL 1 / QM 1276 / 107).